The sequence spans 974 residues: Translation initiation factor IF-2 (974 aa).

Disordered stretches follow at residues 67 to 86 (TRKHTSEIKQSDATGKARTI), 101 to 133 (DVAEGAEQGQAQVAEADDDAELKRREEEARREA), and 146 to 385 (RQER…TFQA). Over residues 105-114 (GAEQGQAQVA) the composition is skewed to low complexity. Composition is skewed to basic and acidic residues over residues 121–133 (ELKRREEEARREA) and 146–181 (RQERLEREEAERRAREEAAEAERRRAEEEAAAKRAA). The span at 182–197 (AEAAAAQQAAAQQAAE) shows a compositional bias: low complexity. Residues 210 to 261 (EEARAAAERAAQREAAKKAEDAAREAADKARAEQEEIRKRREAAEAEARAIR) show a composition bias toward basic and acidic residues. Residues 313 to 329 (PAGATPATTQAPAAGAG) are compositionally biased toward low complexity. A compositionally biased stretch (gly residues) spans 358 to 371 (SSGGVDRGWRGGPK). The 170-residue stretch at 474 to 643 (PRPPVVTVMG…LLQAEVLELK (170 aa)) folds into the tr-type G domain. Residues 483 to 490 (GHVDHGKT) form a G1 region. Position 483–490 (483–490 (GHVDHGKT)) interacts with GTP. The tract at residues 508-512 (GITQH) is G2. Positions 529-532 (DTPG) are G3. GTP-binding positions include 529-533 (DTPGH) and 583-586 (NKID). A G4 region spans residues 583–586 (NKID). The G5 stretch occupies residues 619-621 (SAK).

This sequence belongs to the TRAFAC class translation factor GTPase superfamily. Classic translation factor GTPase family. IF-2 subfamily.

It is found in the cytoplasm. Its function is as follows. One of the essential components for the initiation of protein synthesis. Protects formylmethionyl-tRNA from spontaneous hydrolysis and promotes its binding to the 30S ribosomal subunits. Also involved in the hydrolysis of GTP during the formation of the 70S ribosomal complex. This chain is Translation initiation factor IF-2, found in Burkholderia vietnamiensis (strain G4 / LMG 22486) (Burkholderia cepacia (strain R1808)).